Consider the following 582-residue polypeptide: Sulfite reductase [NADPH] hemoprotein beta-component (582 aa).

Basic and acidic residues predominate over residues 1–12; the sequence is MDLKVKVDRSRD. Residues 1–26 are disordered; it reads MDLKVKVDRSRDVSQPLDKLGPDETL. [4Fe-4S] cluster contacts are provided by Cys447, Cys453, Cys492, and Cys496. Cys496 contacts siroheme.

This sequence belongs to the nitrite and sulfite reductase 4Fe-4S domain family. Alpha(8)-beta(8). The alpha component is a flavoprotein, the beta component is a hemoprotein. Siroheme is required as a cofactor. [4Fe-4S] cluster serves as cofactor.

It catalyses the reaction hydrogen sulfide + 3 NADP(+) + 3 H2O = sulfite + 3 NADPH + 4 H(+). It participates in sulfur metabolism; hydrogen sulfide biosynthesis; hydrogen sulfide from sulfite (NADPH route): step 1/1. Component of the sulfite reductase complex that catalyzes the 6-electron reduction of sulfite to sulfide. This is one of several activities required for the biosynthesis of L-cysteine from sulfate. The sequence is that of Sulfite reductase [NADPH] hemoprotein beta-component from Afipia carboxidovorans (strain ATCC 49405 / DSM 1227 / KCTC 32145 / OM5) (Oligotropha carboxidovorans).